Reading from the N-terminus, the 130-residue chain is Small ribosomal subunit protein uS11 (130 aa).

It belongs to the universal ribosomal protein uS11 family. In terms of assembly, part of the 30S ribosomal subunit. Interacts with proteins S7 and S18. Binds to IF-3.

Functionally, located on the platform of the 30S subunit, it bridges several disparate RNA helices of the 16S rRNA. Forms part of the Shine-Dalgarno cleft in the 70S ribosome. In Shewanella amazonensis (strain ATCC BAA-1098 / SB2B), this protein is Small ribosomal subunit protein uS11.